We begin with the raw amino-acid sequence, 116 residues long: Large ribosomal subunit protein bL20 (116 aa).

Belongs to the bacterial ribosomal protein bL20 family.

Binds directly to 23S ribosomal RNA and is necessary for the in vitro assembly process of the 50S ribosomal subunit. It is not involved in the protein synthesizing functions of that subunit. This is Large ribosomal subunit protein bL20 from Helicobacter pylori (strain HPAG1).